A 443-amino-acid chain; its full sequence is MESLAALYKNHIVTLQERTRDVLARFKLDALLIHSGELFNVFLDDHPYPFKVNPQFKAWVPVTQVPNCWLLVDGVNKPKLWFYLPVDYWHNVEPLPTSFWTEEVEVVALPKADGIGSQLPAARGNIGYIGPVPERALQLDIAASNINPKGVIDYLHYYRAYKTDYELACMREAQKMAVSGHRAAEEAFRSGMSEFDINLAYLTATGHRDTDVPYSNIVALNEHAAVLHYTKLDHQAPSEMRSFLLDAGAEYNGYAADLTRTWSAKSDNDYAHLVKDVNDEQLALIATMKAGVSYVDYHIQFHQRIAKLLRKHQIITDMSEEAMVENDLTGPFMPHGIGHPLGLQVHDVAGFMQDDSGTHLAAPSKYPYLRCTRVLQPRMVLTIEPGIYFIESLLAPWCEGPFSKHFNWQKIEALKPFGGIRIEDNVVIHENGVENMTRDLKLA.

Mn(2+) contacts are provided by aspartate 246, aspartate 257, histidine 339, glutamate 384, and glutamate 423.

The protein belongs to the peptidase M24B family. Bacterial-type prolidase subfamily. The cofactor is Mn(2+).

It catalyses the reaction Xaa-L-Pro dipeptide + H2O = an L-alpha-amino acid + L-proline. In terms of biological role, splits dipeptides with a prolyl residue in the C-terminal position. The protein is Xaa-Pro dipeptidase of Salmonella paratyphi B (strain ATCC BAA-1250 / SPB7).